The chain runs to 142 residues: Large ribosomal subunit protein uL13 (142 aa).

Belongs to the universal ribosomal protein uL13 family. In terms of assembly, part of the 50S ribosomal subunit.

In terms of biological role, this protein is one of the early assembly proteins of the 50S ribosomal subunit, although it is not seen to bind rRNA by itself. It is important during the early stages of 50S assembly. In Stenotrophomonas maltophilia (strain K279a), this protein is Large ribosomal subunit protein uL13.